The chain runs to 353 residues: Phospho-N-acetylmuramoyl-pentapeptide-transferase (353 aa).

10 consecutive transmembrane segments (helical) span residues 13–33 (ILGY…FFTL), 66–86 (TPTM…LISI), 88–108 (FSNL…IIGF), 130–150 (LILQ…LSDF), 162–182 (PLFD…IATS), 193–213 (GLAT…IYIT), 229–249 (IGEV…FLWY), 256–276 (VFMG…LAII), 281–301 (ILLL…ILQV), and 330–350 (KIIV…LITL).

This sequence belongs to the glycosyltransferase 4 family. MraY subfamily. Requires Mg(2+) as cofactor.

The protein localises to the cell inner membrane. It carries out the reaction UDP-N-acetyl-alpha-D-muramoyl-L-alanyl-gamma-D-glutamyl-meso-2,6-diaminopimeloyl-D-alanyl-D-alanine + di-trans,octa-cis-undecaprenyl phosphate = di-trans,octa-cis-undecaprenyl diphospho-N-acetyl-alpha-D-muramoyl-L-alanyl-D-glutamyl-meso-2,6-diaminopimeloyl-D-alanyl-D-alanine + UMP. It participates in cell wall biogenesis; peptidoglycan biosynthesis. Catalyzes the initial step of the lipid cycle reactions in the biosynthesis of the cell wall peptidoglycan: transfers peptidoglycan precursor phospho-MurNAc-pentapeptide from UDP-MurNAc-pentapeptide onto the lipid carrier undecaprenyl phosphate, yielding undecaprenyl-pyrophosphoryl-MurNAc-pentapeptide, known as lipid I. The sequence is that of Phospho-N-acetylmuramoyl-pentapeptide-transferase from Sulfurimonas denitrificans (strain ATCC 33889 / DSM 1251) (Thiomicrospira denitrificans (strain ATCC 33889 / DSM 1251)).